Consider the following 2568-residue polypeptide: Highly reducing polyketide synthase resH (2568 aa).

In terms of domain architecture, Ketosynthase family 3 (KS3) spans 9–437 (PEPIAIVGMA…GANAHAILDA (429 aa)). Active-site for beta-ketoacyl synthase activity residues include C184, H319, and H359. A Malonyl-CoA:ACP transacylase (MAT) domain is found at 549-877 (FIFTGQGAQW…KLAGSLFLSG (329 aa)). An N-terminal hotdog fold region spans residues 942–1081 (HDLLGSRLPG…TNDQLLWPDD (140 aa)). Residues 942 to 1244 (HDLLGSRLPG…FSSLETASSD (303 aa)) enclose the PKS/mFAS DH domain. The active-site Proton acceptor; for dehydratase activity is H974. Residues 1091 to 1244 (NKDSYDRRWY…FSSLETASSD (154 aa)) form a C-terminal hotdog fold region. Residue D1156 is the Proton donor; for dehydratase activity of the active site. Residues 1295–1595 (VTRLAIRSSA…SGADVVLDDY (301 aa)) are methyltransferase (CMet) domain. Positions 1853 to 2154 (GRLDSFYFKE…QEDSVGLAVL (302 aa)) constitute an Enoyl reductase (ER) domain. Positions 2177–2357 (ASYLLIGCLG…QATSIALGMI (181 aa)) constitute a Ketoreductase (KR) domain. The 79-residue stretch at 2485 to 2563 (AVKSAILGLI…GLADQVVSLA (79 aa)) folds into the Carrier domain. O-(pantetheine 4'-phosphoryl)serine is present on S2522.

Pantetheine 4'-phosphate serves as cofactor.

It participates in antifungal biosynthesis. Its function is as follows. Highly reducing polyketide synthase; part of the gene cluster that mediates the biosynthesis of the tetrahydropyranyl antifungal agent restricticin that acts as an inhibitor of CYP51 and blocks the ergosterol biosynthesis. The highly reducing polyketide synthase resH, the short chain dehydrogenase resG, the cyclase resF, the FAD-dependent monooxygenase resA and the enoylreductase resD are required to generate the first stable intermediate desmethylrestrictinol. ResH with resD biosynthesize the first polyketide chain intermediate that is reduced by resG, followed by epoxidation by resA before 6-endo cyclization via epoxide opening by resF leads to desmethylrestrictinol. The methyltransferase resE then catalyzes the C4 O-methylation of desmethylrestrictinol to produce restrictinol, and the nonribosomal peptide synthetase resC catalyzes the C3 esterification of restrictinol with glycine that leads to restricticin. The sequence is that of Highly reducing polyketide synthase resH from Aspergillus sclerotiorum.